A 219-amino-acid chain; its full sequence is Proteasome subunit beta (219 aa).

Positions 1-14 (MISGSEYHKEYMKG) are cleaved as a propeptide — removed in mature form; by autocatalysis. Threonine 15 serves as the catalytic Nucleophile.

It belongs to the peptidase T1B family. The 20S proteasome core is composed of 14 alpha and 14 beta subunits that assemble into four stacked heptameric rings, resulting in a barrel-shaped structure. The two inner rings, each composed of seven catalytic beta subunits, are sandwiched by two outer rings, each composed of seven alpha subunits. The catalytic chamber with the active sites is on the inside of the barrel. Has a gated structure, the ends of the cylinder being occluded by the N-termini of the alpha-subunits. Is capped at one or both ends by the proteasome regulatory ATPase, PAN.

It is found in the cytoplasm. It carries out the reaction Cleavage of peptide bonds with very broad specificity.. Its activity is regulated as follows. The formation of the proteasomal ATPase PAN-20S proteasome complex, via the docking of the C-termini of PAN into the intersubunit pockets in the alpha-rings, triggers opening of the gate for substrate entry. Interconversion between the open-gate and close-gate conformations leads to a dynamic regulation of the 20S proteasome proteolysis activity. Component of the proteasome core, a large protease complex with broad specificity involved in protein degradation. This Methanococcus vannielii (strain ATCC 35089 / DSM 1224 / JCM 13029 / OCM 148 / SB) protein is Proteasome subunit beta.